Consider the following 293-residue polypeptide: MDRAKQQQALLLLPVCLALTFSLTAVVSSHWCEGTRRVVKPLCQDQPGGQHCIHFKRDNSSNGRMDNNSQAVLYIWELGDDKFIQRGFHVGLWQSCEESLNGEDEKCRSFRSVVPAEEQGVLWLSIGGEVLDIVLILTSAILLGSRVSCRSPGFHWLRVDALVAIFMVLAGLLGMVAHMMYTTIFQITVNLGPEDWKPQTWDYGWSYCLAWGSFALCLAVSVSAMSRFTAARLEFTEKQQAQNGSRHSQHSFLEPEASESIWKTGAAPCPAEQAFRNVSGHLPPGAPGKVSIC.

Residues 1–8 (MDRAKQQQ) lie on the Cytoplasmic side of the membrane. Residues 9–29 (ALLLLPVCLALTFSLTAVVSS) form a helical membrane-spanning segment. The Extracellular segment spans residues 30–120 (HWCEGTRRVV…RSVVPAEEQG (91 aa)). N-linked (GlcNAc...) asparagine glycosylation is found at N59 and N67. Residues 121–141 (VLWLSIGGEVLDIVLILTSAI) traverse the membrane as a helical segment. Residues 142–160 (LLGSRVSCRSPGFHWLRVD) lie on the Cytoplasmic side of the membrane. Residues 161–181 (ALVAIFMVLAGLLGMVAHMMY) form a helical membrane-spanning segment. Over 182-204 (TTIFQITVNLGPEDWKPQTWDYG) the chain is Extracellular. The chain crosses the membrane as a helical span at residues 205 to 225 (WSYCLAWGSFALCLAVSVSAM). Over 226 to 293 (SRFTAARLEF…PGAPGKVSIC (68 aa)) the chain is Cytoplasmic.

This sequence belongs to the GSG1 family.

The protein resides in the membrane. The chain is Germ cell-specific gene 1-like protein 2 from Homo sapiens (Human).